The chain runs to 273 residues: Chaperone protein PsaB (273 aa).

An N-terminal signal peptide occupies residues 1 to 31 (MKNLFFSAYKKVFSYITSIVIFMVSLPYAYS). Cysteine 128 and cysteine 163 are joined by a disulfide.

Belongs to the periplasmic pilus chaperone family.

The protein localises to the periplasm. Required for the biogenesis of the pH 6 antigen. This is Chaperone protein PsaB (psaB) from Yersinia pestis.